Consider the following 616-residue polypeptide: Dihydroxy-acid dehydratase (616 aa).

Asp81 contacts Mg(2+). Cys122 is a [2Fe-2S] cluster binding site. Positions 123 and 124 each coordinate Mg(2+). Lys124 is subject to N6-carboxylysine. Position 197 (Cys197) interacts with [2Fe-2S] cluster. Glu493 lines the Mg(2+) pocket. The Proton acceptor role is filled by Ser519.

The protein belongs to the IlvD/Edd family. In terms of assembly, homodimer. [2Fe-2S] cluster is required as a cofactor. Requires Mg(2+) as cofactor.

The enzyme catalyses (2R)-2,3-dihydroxy-3-methylbutanoate = 3-methyl-2-oxobutanoate + H2O. The catalysed reaction is (2R,3R)-2,3-dihydroxy-3-methylpentanoate = (S)-3-methyl-2-oxopentanoate + H2O. The protein operates within amino-acid biosynthesis; L-isoleucine biosynthesis; L-isoleucine from 2-oxobutanoate: step 3/4. It participates in amino-acid biosynthesis; L-valine biosynthesis; L-valine from pyruvate: step 3/4. Its function is as follows. Functions in the biosynthesis of branched-chain amino acids. Catalyzes the dehydration of (2R,3R)-2,3-dihydroxy-3-methylpentanoate (2,3-dihydroxy-3-methylvalerate) into 2-oxo-3-methylpentanoate (2-oxo-3-methylvalerate) and of (2R)-2,3-dihydroxy-3-methylbutanoate (2,3-dihydroxyisovalerate) into 2-oxo-3-methylbutanoate (2-oxoisovalerate), the penultimate precursor to L-isoleucine and L-valine, respectively. In Corynebacterium kroppenstedtii (strain DSM 44385 / JCM 11950 / CIP 105744 / CCUG 35717), this protein is Dihydroxy-acid dehydratase.